A 207-amino-acid chain; its full sequence is 2,3-bisphosphoglycerate-dependent phosphoglycerate mutase (207 aa).

Substrate is bound by residues 10–17 (RHGQSEWN), 23–24 (TG), Arg62, 89–92 (ERDY), Lys100, 116–117 (RR), and 160–161 (GN). Catalysis depends on His11, which acts as the Tele-phosphohistidine intermediate. The Proton donor/acceptor role is filled by Glu89.

This sequence belongs to the phosphoglycerate mutase family. BPG-dependent PGAM subfamily. In terms of assembly, homodimer.

The catalysed reaction is (2R)-2-phosphoglycerate = (2R)-3-phosphoglycerate. Its pathway is carbohydrate degradation; glycolysis; pyruvate from D-glyceraldehyde 3-phosphate: step 3/5. In terms of biological role, catalyzes the interconversion of 2-phosphoglycerate and 3-phosphoglycerate. The protein is 2,3-bisphosphoglycerate-dependent phosphoglycerate mutase of Rhodopseudomonas palustris (strain BisB18).